Consider the following 862-residue polypeptide: DNA mismatch repair protein MutS (862 aa).

613–620 (GPNMAGKS) is an ATP binding site.

Belongs to the DNA mismatch repair MutS family.

This protein is involved in the repair of mismatches in DNA. It is possible that it carries out the mismatch recognition step. This protein has a weak ATPase activity. The polypeptide is DNA mismatch repair protein MutS (Desulfitobacterium hafniense (strain Y51)).